Reading from the N-terminus, the 295-residue chain is Non-selective voltage-gated ion channel VDAC2 (295 aa).

ATP contacts are provided by K24 and K32. N6-acetyllysine; alternate is present on K32. Position 32 is an N6-succinyllysine; alternate (K32). Residue K32 forms a Glycyl lysine isopeptide (Lys-Gly) (interchain with G-Cter in ubiquitin); alternate linkage. 2 beta stranded membrane passes run 38 to 45 (LVKLDVKT) and 51 to 60 (VEFSTSGSSN). Residue K65 forms a Glycyl lysine isopeptide (Lys-Gly) (interchain with G-Cter in ubiquitin) linkage. The chain crosses the membrane as a beta stranded span at residues 66–76 (VSGTLETKYKW). A Phosphotyrosine modification is found at Y79. The next 3 beta stranded transmembrane spans lie at 81 to 88 (LTFTEKWN), 92 to 100 (TLGTEIAIE), and 107 to 116 (LKLTFDTTFS). At T119 the chain carries Phosphothreonine. N6-acetyllysine; alternate is present on K121. K121 participates in a covalent cross-link: Glycyl lysine isopeptide (Lys-Gly) (interchain with G-Cter in ubiquitin); alternate. K122 is covalently cross-linked (Glycyl lysine isopeptide (Lys-Gly) (interchain with G-Cter in ubiquitin)). 4 consecutive transmembrane segments (beta stranded) span residues 122–131 (KSGKIKSAYK), 135–144 (INLGCDVDFD), 148–157 (PAIHGSAVFG), and 161–170 (WLAGYQMTFD). A Glycyl lysine isopeptide (Lys-Gly) (interchain with G-Cter in ubiquitin) cross-link involves residue K173. A run of 6 beta stranded transmembrane segments spans residues 177-187 (TRSNFAVGYRT), 190-197 (FQLHTNVN), 201-210 (EFGGSIYQKV), 214-222 (FDTSVNLAW), 229-238 (TRFGIAAKYQ), and 243-250 (ASISAKVN). The residue at position 252 (S252) is a Phosphoserine. Residues 254 to 256 (LIG) and 272 to 276 (SALVD) contribute to the NAD(+) site. 2 consecutive transmembrane segments (beta stranded) span residues 254–263 (LIGVGYTQTL) and 267–275 (VKLTLSALV). Residue K278 is modified to N6-acetyllysine; alternate. Residue K278 forms a Glycyl lysine isopeptide (Lys-Gly) (interchain with G-Cter in ubiquitin); alternate linkage. Residues 285–295 (HKLGLALELEA) traverse the membrane as a beta stranded segment.

It belongs to the eukaryotic mitochondrial porin family. Monomer, homodimer and higher order oligomers; formation of higher order structures is necessary for scramblase activity. Interacts with ARMC12 in a TBC1D21-dependent manner. Interacts with KLC3. Interacts with SPATA33. Interacts with PPP3CC in a SPATA33-dependent manner. Post-translationally, ubiquitinated by PRKN during mitophagy, leading to its degradation and enhancement of mitophagy. Deubiquitinated by USP30. Highest levels of expression detected in testis, less but still abundant expression in heart, kidney, brain, and skeletal muscle. Expressed in the sperm midpiece (at protein level).

The protein resides in the mitochondrion outer membrane. It localises to the membrane. It catalyses the reaction chloride(in) = chloride(out). The catalysed reaction is K(+)(in) = K(+)(out). It carries out the reaction a 1,2-diacyl-sn-glycero-3-phospho-L-serine(in) = a 1,2-diacyl-sn-glycero-3-phospho-L-serine(out). The enzyme catalyses a 1,2-diacyl-sn-glycero-3-phosphocholine(in) = a 1,2-diacyl-sn-glycero-3-phosphocholine(out). It catalyses the reaction a 1,2-diacyl-sn-glycero-3-phospho-(1D-myo-inositol)(in) = a 1,2-diacyl-sn-glycero-3-phospho-(1D-myo-inositol)(out). Non-selective voltage-gated ion channel that mediates the transport of anions and cations through the mitochondrion outer membrane and plasma membrane. The channel adopts an open conformation at zero mV and a closed conformation at both positive and negative potentials. There are two populations of channels; the main that functions in a lower open-state conductance with lower ion selectivity, that switch, in a voltage-dependent manner, from the open to a low-conducting 'closed' state and the other that has a normal ion selectivity in the typical high conductance, 'open' state. Binds various lipids, including the sphingolipid ceramide, the phospholipid phosphatidylcholine, and the sterols cholesterol and oxysterol. Binding of ceramide promotes the mitochondrial outer membrane permeabilization (MOMP) apoptotic pathway. Functionally, catalyzes the scrambling of phospholipids across the outer mitochondrial membrane; the mechanism is unrelated to channel activity and is capable of translocating both anionic and zwitterionic phospholipids. In Mus musculus (Mouse), this protein is Non-selective voltage-gated ion channel VDAC2.